Reading from the N-terminus, the 324-residue chain is Bis(5'-nucleosyl)-tetraphosphatase, symmetrical (324 aa).

The interval 269 to 324 is disordered; sequence PGREVTAPATAPRAPRRPRERQGRQRARGGRGGGNGNGNGGNAAAPAAAPGDAPQE. Over residues 282–297 the composition is skewed to basic residues; sequence APRRPRERQGRQRARG. A compositionally biased stretch (gly residues) spans 298–309; that stretch reads GRGGGNGNGNGG. Residues 310–324 are compositionally biased toward low complexity; it reads NAAAPAAAPGDAPQE.

It belongs to the Ap4A hydrolase family.

The catalysed reaction is P(1),P(4)-bis(5'-adenosyl) tetraphosphate + H2O = 2 ADP + 2 H(+). Hydrolyzes diadenosine 5',5'''-P1,P4-tetraphosphate to yield ADP. In Xanthomonas campestris pv. campestris (strain ATCC 33913 / DSM 3586 / NCPPB 528 / LMG 568 / P 25), this protein is Bis(5'-nucleosyl)-tetraphosphatase, symmetrical.